The chain runs to 251 residues: Flap endonuclease Xni (251 aa).

Residue Asp104 participates in Mg(2+) binding. The region spanning 160-250 (VQPQQLPDYW…DGNLQQLRLK (91 aa)) is the 5'-3' exonuclease domain. Positions 171, 172, 180, 182, and 185 each coordinate K(+). Positions 184–189 (GIGPKS) are interaction with DNA.

It belongs to the Xni family. Mg(2+) is required as a cofactor. K(+) serves as cofactor.

In terms of biological role, has flap endonuclease activity. During DNA replication, flap endonucleases cleave the 5'-overhanging flap structure that is generated by displacement synthesis when DNA polymerase encounters the 5'-end of a downstream Okazaki fragment. The sequence is that of Flap endonuclease Xni from Escherichia fergusonii (strain ATCC 35469 / DSM 13698 / CCUG 18766 / IAM 14443 / JCM 21226 / LMG 7866 / NBRC 102419 / NCTC 12128 / CDC 0568-73).